We begin with the raw amino-acid sequence, 98 residues long: NADH-ubiquinone oxidoreductase chain 4L (98 aa).

3 consecutive transmembrane segments (helical) span residues 1–21 (MSLIHINIFLAFTVSLMGLLM), 29–49 (SLLCLEGMMLSLFIMATMMVL), and 61–81 (IILLVFAACEAALGLSLLVMI).

Belongs to the complex I subunit 4L family. In terms of assembly, core subunit of respiratory chain NADH dehydrogenase (Complex I) which is composed of 45 different subunits.

It is found in the mitochondrion inner membrane. The enzyme catalyses a ubiquinone + NADH + 5 H(+)(in) = a ubiquinol + NAD(+) + 4 H(+)(out). Its function is as follows. Core subunit of the mitochondrial membrane respiratory chain NADH dehydrogenase (Complex I) which catalyzes electron transfer from NADH through the respiratory chain, using ubiquinone as an electron acceptor. Part of the enzyme membrane arm which is embedded in the lipid bilayer and involved in proton translocation. The chain is NADH-ubiquinone oxidoreductase chain 4L (MT-ND4L) from Rhinoceros unicornis (Greater Indian rhinoceros).